Consider the following 325-residue polypeptide: MTTVLAIETSCDETSVAIVKNRQVLSNIVKSQINIHSFYGGVVPEVASRQHLEIINQAIAQAFREANLDWPDIDGIGATCAPGLVGALLVGLTAAKTLAIVHEKPFVGVHHLEGHIYATYLSQPELVPPFLCLLVSGGHTSLIYVKNCGEYETLGQTRDDAAGEAFDKVARLLKLGYPGGPVIDKLAAEGNKLAFSLPEGKISLPGGGYHPYDFSFSGLKTAVLRLVQKIEQEGNELLSGSSVTKDIAASFQETVAKGLTKRAIACALDYSLNTIAIGGGVAANSSLRQHLSRAVESHNLQVLFPSLRFCTDNAAMIGCVRLVGH.

The Fe cation site is built by His111 and His115. Residues 134–138 (LVSGG), Asp167, Gly180, Asp184, and Asn284 each bind substrate. Asp312 lines the Fe cation pocket.

It belongs to the KAE1 / TsaD family. Fe(2+) serves as cofactor.

The protein resides in the cytoplasm. It carries out the reaction L-threonylcarbamoyladenylate + adenosine(37) in tRNA = N(6)-L-threonylcarbamoyladenosine(37) in tRNA + AMP + H(+). Functionally, required for the formation of a threonylcarbamoyl group on adenosine at position 37 (t(6)A37) in tRNAs that read codons beginning with adenine. Is involved in the transfer of the threonylcarbamoyl moiety of threonylcarbamoyl-AMP (TC-AMP) to the N6 group of A37, together with TsaE and TsaB. TsaD likely plays a direct catalytic role in this reaction. The polypeptide is tRNA N6-adenosine threonylcarbamoyltransferase (Trichodesmium erythraeum (strain IMS101)).